The following is an 824-amino-acid chain: Probable ion channel POLLUX (824 aa).

Residues 45-54 (DGDDSSNLPT) are compositionally biased toward low complexity. Residues 45-70 (DGDDSSNLPTVPNPEEKPVPVPSQSP) are disordered. The next 4 membrane-spanning stretches (helical) occupy residues 81-101 (FSLTHCLKFICSCSFTYVMFL), 135-155 (AVVFFSVIITFVLPFLLYMYL), 198-218 (LALLLATVVLIVYGGLALYAV), and 250-270 (IVSVAISAGGMLIFATMLGLI). 2 RCK N-terminal domains span residues 291–432 (SNHI…ETVV) and 550–699 (PEKI…DKSI). A coiled-coil region spans residues 325-346 (LAERDKEEMETDIAKFEFDLMG).

It belongs to the castor/pollux (TC 1.A.1.23) family.

The protein resides in the nucleus membrane. This is Probable ion channel POLLUX from Arabidopsis thaliana (Mouse-ear cress).